Here is a 280-residue protein sequence, read N- to C-terminus: Sulfur carrier protein FdhD (280 aa).

The active-site Cysteine persulfide intermediate is cysteine 121. 258 to 263 (FSRPGR) is a binding site for Mo-bis(molybdopterin guanine dinucleotide).

The protein belongs to the FdhD family.

The protein resides in the cytoplasm. Required for formate dehydrogenase (FDH) activity. Acts as a sulfur carrier protein that transfers sulfur from IscS to the molybdenum cofactor prior to its insertion into FDH. The polypeptide is Sulfur carrier protein FdhD (Cronobacter sakazakii (strain ATCC BAA-894) (Enterobacter sakazakii)).